A 125-amino-acid chain; its full sequence is UPF0738 protein GK0828 (125 aa).

It belongs to the UPF0738 family.

This is UPF0738 protein GK0828 from Geobacillus kaustophilus (strain HTA426).